Reading from the N-terminus, the 220-residue chain is Cytidylate kinase (220 aa).

ATP is bound at residue 9–17 (GPAASGKST).

This sequence belongs to the cytidylate kinase family. Type 1 subfamily.

The protein resides in the cytoplasm. It carries out the reaction CMP + ATP = CDP + ADP. The enzyme catalyses dCMP + ATP = dCDP + ADP. The sequence is that of Cytidylate kinase from Thermotoga neapolitana (strain ATCC 49049 / DSM 4359 / NBRC 107923 / NS-E).